The following is a 161-amino-acid chain: Cytochrome b6-f complex subunit 4 (161 aa).

3 consecutive transmembrane segments (helical) span residues 37-57 (LLYI…GLAV), 96-116 (LLGV…PFIE), and 132-152 (SVFL…TLPI).

This sequence belongs to the cytochrome b family. PetD subfamily. In terms of assembly, the 4 large subunits of the cytochrome b6-f complex are cytochrome b6, subunit IV (17 kDa polypeptide, PetD), cytochrome f and the Rieske protein, while the 4 small subunits are PetG, PetL, PetM and PetN. The complex functions as a dimer.

Its subcellular location is the cellular thylakoid membrane. Component of the cytochrome b6-f complex, which mediates electron transfer between photosystem II (PSII) and photosystem I (PSI), cyclic electron flow around PSI, and state transitions. This chain is Cytochrome b6-f complex subunit 4, found in Acaryochloris marina (strain MBIC 11017).